The sequence spans 126 residues: Regulatory protein MgsR (126 aa).

C13 and C16 are joined by a disulfide.

Belongs to the ArsC family.

The protein resides in the cytoplasm. With respect to regulation, activity is controlled at multiple levels. Regulation includes a positive autoregulatory loop on mgsR transcription and a post-translational redox-sensitive activation step by an intramolecular disulfide bond formation in response to ethanol stress. In addition, protein stability is strictly controlled by rapid proteolytic degradation by the ClpXP and ClpCP proteases. The McsB protein-arginine kinase might serve as a proteolytic adapter for the ClpX ATPase in the degradation mechanism of MgsR. Regulates transcription of a subregulon within the general stress response. Exerts positive and negative effects in response to ethanol stress. The protein is Regulatory protein MgsR of Bacillus subtilis (strain 168).